Reading from the N-terminus, the 303-residue chain is Sulfate adenylyltransferase subunit 2 (303 aa).

This sequence belongs to the PAPS reductase family. CysD subfamily. Heterodimer composed of CysD, the smaller subunit, and CysN.

The catalysed reaction is sulfate + ATP + H(+) = adenosine 5'-phosphosulfate + diphosphate. The protein operates within sulfur metabolism; hydrogen sulfide biosynthesis; sulfite from sulfate: step 1/3. Functionally, with CysN forms the ATP sulfurylase (ATPS) that catalyzes the adenylation of sulfate producing adenosine 5'-phosphosulfate (APS) and diphosphate, the first enzymatic step in sulfur assimilation pathway. APS synthesis involves the formation of a high-energy phosphoric-sulfuric acid anhydride bond driven by GTP hydrolysis by CysN coupled to ATP hydrolysis by CysD. This Sulfurimonas denitrificans (strain ATCC 33889 / DSM 1251) (Thiomicrospira denitrificans (strain ATCC 33889 / DSM 1251)) protein is Sulfate adenylyltransferase subunit 2.